We begin with the raw amino-acid sequence, 663 residues long: MSNSGKKLTQKLKKNLPVTGPQAPTLYELMQWYCLNTNTHGCRRIVVSKGRLRRWIWIVLTLIAVALIFWQCALLLMTYYSVSASITVTFQKLVYPAVTICNLNPYSYSKIKDRLATLEKTTNQTLKKIYGFTEPLIRSKRDLDVNDENSTEDIFLKQIPLFRLESIKGNQLVVSDLKTKKRTQISGKVIQRDAGSVQDSDNMVGFKLCDANNSSDCTIFTFGSGVNAIQEWYRLHYNNILAKISMEDKIAMGYKADELIVTCLFDGLSCDARNFTLFHHPLYGNCYTFNSAERGNLLVSSMGGAEYGLKVVLYIDEDEYNPYLSTAAGAKILVHDQDEYPFIEDLGTELETGTETSIGMQLTESTKLSDPYSDCTIDGSDISVENLYNKKYTLQICLNSCFQREMVRSCGCAHYDQPLPNGAKYCNYEEYPNWIYCYVKLYKQFVQEELGCQSTCRESCSFKEWTLTRSLAKWPSLNSEEWMLRVLSWELGEKLNKNLTKNDLGNLNIFYQDLNSRSISESPTYNIVTLLSNFGGQLGLWMSCSMVCGLEIVEVFFIDSFWVILRQKWHKLCNWWKNRKENEIEEIPDITVPAMAGHNNPLCVDHPICLGEDDPPTFHSALQLPQAQDCRVPRTPPPKYNTLRIQSAFHLETIDSDEDVERF.

The Cytoplasmic segment spans residues Met1 to Trp55. The helical transmembrane segment at Ile56–Leu76 threads the bilayer. Residues Met77–Cys544 are Extracellular-facing. Intrachain disulfides connect Cys101–Cys286, Cys209–Cys217, Cys263–Cys270, Cys375–Cys460, Cys397–Cys456, Cys401–Cys452, Cys410–Cys437, and Cys412–Cys426. The chain crosses the membrane as a helical span at residues Ser545 to Leu565. Over Arg566–Phe663 the chain is Cytoplasmic.

This sequence belongs to the amiloride-sensitive sodium channel (TC 1.A.6) family. SCNN1G subfamily. In terms of assembly, component of the heterotrimeric epithelial sodium channel (ENaC) composed of an alpha/SCNN1A, a beta/SCNN1B and a gamma/SCNN1G subunit.

It is found in the apical cell membrane. It catalyses the reaction Na(+)(in) = Na(+)(out). With respect to regulation, originally identified and characterized by its inhibition by the diuretic drug amiloride. In terms of biological role, this is one of the three pore-forming subunits of the heterotrimeric epithelial sodium channel (ENaC), a critical regulator of sodium balance and fluid homeostasis. ENaC operates in epithelial tissues, where it mediates the electrodiffusion of sodium ions from extracellular fluid through the apical membrane of cells, with water following osmotically. The polypeptide is Epithelial sodium channel subunit gamma-2 (scnn1g-b) (Xenopus laevis (African clawed frog)).